The following is a 354-amino-acid chain: Photosystem II protein D1 3 (354 aa).

3 helical membrane passes run 29–46 (YIGW…TATT), 118–133 (HFLI…EWEL), and 142–156 (WIAV…AATA). Histidine 118 contributes to the chlorophyll a binding site. Tyrosine 126 provides a ligand contact to pheophytin a. [CaMn4O5] cluster-binding residues include aspartate 170 and glutamate 189. A helical transmembrane segment spans residues 197-218 (FHQLGVAGVFGGALFSAMHGSL). Histidine 198 is a binding site for chlorophyll a. A quinone contacts are provided by residues histidine 215 and 264–265 (SF). Histidine 215 serves as a coordination point for Fe cation. Histidine 272 is a binding site for Fe cation. The chain crosses the membrane as a helical span at residues 274–288 (FLAAWPVIGIWFTAL). [CaMn4O5] cluster-binding residues include histidine 332, glutamate 333, aspartate 342, and alanine 344. Residues 345-354 (AVEVAPAVRG) constitute a propeptide that is removed on maturation.

This sequence belongs to the reaction center PufL/M/PsbA/D family. As to quaternary structure, PSII is composed of 1 copy each of membrane proteins PsbA, PsbB, PsbC, PsbD, PsbE, PsbF, PsbH, PsbI, PsbJ, PsbK, PsbL, PsbM, PsbT, PsbX, PsbY, PsbZ, Psb30/Ycf12, peripheral proteins PsbO, CyanoQ (PsbQ), PsbU, PsbV and a large number of cofactors. It forms dimeric complexes. The cofactor is The D1/D2 heterodimer binds P680, chlorophylls that are the primary electron donor of PSII, and subsequent electron acceptors. It shares a non-heme iron and each subunit binds pheophytin, quinone, additional chlorophylls, carotenoids and lipids. D1 provides most of the ligands for the Mn4-Ca-O5 cluster of the oxygen-evolving complex (OEC). There is also a Cl(-1) ion associated with D1 and D2, which is required for oxygen evolution. The PSII complex binds additional chlorophylls, carotenoids and specific lipids.. In terms of processing, tyr-161 forms a radical intermediate that is referred to as redox-active TyrZ, YZ or Y-Z. Post-translationally, C-terminally processed by CtpA; processing is essential to allow assembly of the oxygen-evolving complex and thus photosynthetic growth.

Its subcellular location is the cellular thylakoid membrane. The catalysed reaction is 2 a plastoquinone + 4 hnu + 2 H2O = 2 a plastoquinol + O2. Functionally, photosystem II (PSII) is a light-driven water:plastoquinone oxidoreductase that uses light energy to abstract electrons from H(2)O, generating O(2) and a proton gradient subsequently used for ATP formation. It consists of a core antenna complex that captures photons, and an electron transfer chain that converts photonic excitation into a charge separation. The D1/D2 (PsbA/PsbD) reaction center heterodimer binds P680, the primary electron donor of PSII as well as several subsequent electron acceptors. The chain is Photosystem II protein D1 3 from Synechococcus sp. (strain JA-3-3Ab) (Cyanobacteria bacterium Yellowstone A-Prime).